The chain runs to 425 residues: Enolase (425 aa).

Gln-162 lines the (2R)-2-phosphoglycerate pocket. Glu-204 serves as the catalytic Proton donor. Mg(2+) is bound by residues Asp-241, Glu-282, and Asp-309. (2R)-2-phosphoglycerate is bound by residues Lys-334, Arg-363, Ser-364, and Lys-385. The active-site Proton acceptor is the Lys-334.

The protein belongs to the enolase family. It depends on Mg(2+) as a cofactor.

The protein localises to the cytoplasm. The protein resides in the secreted. It is found in the cell surface. The enzyme catalyses (2R)-2-phosphoglycerate = phosphoenolpyruvate + H2O. Its pathway is carbohydrate degradation; glycolysis; pyruvate from D-glyceraldehyde 3-phosphate: step 4/5. Functionally, catalyzes the reversible conversion of 2-phosphoglycerate (2-PG) into phosphoenolpyruvate (PEP). It is essential for the degradation of carbohydrates via glycolysis. In Corynebacterium urealyticum (strain ATCC 43042 / DSM 7109), this protein is Enolase.